Reading from the N-terminus, the 667-residue chain is DNA ligase (667 aa).

NAD(+) contacts are provided by residues 32–36 (DSEYD), 81–82 (SL), and Glu110. Catalysis depends on Lys112, which acts as the N6-AMP-lysine intermediate. 4 residues coordinate NAD(+): Arg133, Glu167, Lys283, and Lys307. Residues Cys401, Cys404, Cys419, and Cys424 each contribute to the Zn(2+) site. One can recognise a BRCT domain in the interval 586 to 667 (EGHPEFSGKT…FVDKQNELNS (82 aa)).

It belongs to the NAD-dependent DNA ligase family. LigA subfamily. Mg(2+) is required as a cofactor. Mn(2+) serves as cofactor.

It carries out the reaction NAD(+) + (deoxyribonucleotide)n-3'-hydroxyl + 5'-phospho-(deoxyribonucleotide)m = (deoxyribonucleotide)n+m + AMP + beta-nicotinamide D-nucleotide.. In terms of biological role, DNA ligase that catalyzes the formation of phosphodiester linkages between 5'-phosphoryl and 3'-hydroxyl groups in double-stranded DNA using NAD as a coenzyme and as the energy source for the reaction. It is essential for DNA replication and repair of damaged DNA. This is DNA ligase from Staphylococcus aureus (strain COL).